The following is a 930-amino-acid chain: Nonribosomal peptide synthetase btyA (930 aa).

The segment at 31-440 (ESPHRLTYAE…RGRSKELICI (410 aa)) is adenylation (A) domain. The region spanning 570–647 (PAGNETETLL…VLARQLQDGH (78 aa)) is the Carrier domain. Serine 607 bears the O-(pantetheine 4'-phosphoryl)serine mark. A thioesterase (TE) domain region spans residues 667–920 (PLWLIHPIGG…EDNVHKVYRV (254 aa)).

Belongs to the NRP synthetase family.

It catalyses the reaction 2 3-(4-hydroxyphenyl)pyruvate + H(+) = (2S)-2-(4-hydoxybenzyl)-3-(4-hydroxyphenyl)-2-furonol carboxylate + H2O. It participates in secondary metabolite biosynthesis. In terms of biological role, nonribosomal peptide synthetase; part of the gene cluster that mediates the biosynthesis of butyrolactones, natural products that show a wide range of biological activities such as antitumor, antiparasitic or anti-inflammatory activity. The nonribosomal peptide synthetase btyA is responsible for the production of butyrolactone II, the core structure of butyrolactones. BtyA first activates 4-hydroxyphenylpyruvate (HPPA) through its A domain to AMP-HPPA. The HPPA unit is then loaded to the T domain and eventually transferred to the TE domain. Upon loading of another HPPA unit to the T domain, the TE domain promotes the enolate formation on the unit attached. Then aldol condensation establishes the carbon-carbon bond between the two units, followed by ester cyclization, and keto-enol tautomerization to yield the gamma-butyrolactone core. Hydrolysis, and finally esterification of the exposed carboxylic acid group yields butyrolactone II. Two additional enzymes, a prenyltransferase and an epoxidase, may be involved in the tailoring modifications of butyrolactone II to give butyrolactone III and butyrolactone I. The chain is Nonribosomal peptide synthetase btyA from Aspergillus terreus (strain NIH 2624 / FGSC A1156).